The primary structure comprises 310 residues: MFDAKSFIEESVEDIKKQINGRKTIIALSGGVDSSVAAVLTGKAIGDQLLAVYVDTGLMRKNESNEIWNIFKEQMGLNLKIVEAKDLFLSELAGIDDPEQKRKIIGRIFIEVFEKVAKEQGEEILVQGTIAPDWIESEGQIKTHHNIALPSGMVLEVVEPLRDLYKDEVRKLATELGLPEKIAHRQPFPGPGLAVRILGEITEEKLEICKEANFIVSEEIEKTGLQKELWQYFAAVLDTKATGVKGDIRDYNWVVALRFVKSLDAMTAHTPEIPFDLIKRISKRITSEIPNVTRVVLDVTDKPPATIEFE.

Residues 2-185 enclose the GMPS ATP-PPase domain; the sequence is FDAKSFIEES…LGLPEKIAHR (184 aa). ATP is bound at residue 29–35; sequence SGGVDSS.

Heterodimer composed of a glutamine amidotransferase subunit (A) and a GMP-binding subunit (B).

It catalyses the reaction XMP + L-glutamine + ATP + H2O = GMP + L-glutamate + AMP + diphosphate + 2 H(+). The protein operates within purine metabolism; GMP biosynthesis; GMP from XMP (L-Gln route): step 1/1. In terms of biological role, catalyzes the synthesis of GMP from XMP. The sequence is that of GMP synthase [glutamine-hydrolyzing] subunit B from Methanococcus vannielii (strain ATCC 35089 / DSM 1224 / JCM 13029 / OCM 148 / SB).